Reading from the N-terminus, the 109-residue chain is Nucleoid-associated protein Ssed_2851 (109 aa).

This sequence belongs to the YbaB/EbfC family. As to quaternary structure, homodimer.

The protein localises to the cytoplasm. Its subcellular location is the nucleoid. Its function is as follows. Binds to DNA and alters its conformation. May be involved in regulation of gene expression, nucleoid organization and DNA protection. This chain is Nucleoid-associated protein Ssed_2851, found in Shewanella sediminis (strain HAW-EB3).